A 269-amino-acid polypeptide reads, in one-letter code: Phosphatidylglycerol--prolipoprotein diacylglyceryl transferase (269 aa).

7 helical membrane-spanning segments follow: residues isoleucine 10–phenylalanine 30, alanine 56–tyrosine 76, isoleucine 91–phenylalanine 111, phenylalanine 126–glycine 146, proline 172–phenylalanine 192, tyrosine 200–valine 220, and glutamate 237–leucine 257. A 1,2-diacyl-sn-glycero-3-phospho-(1'-sn-glycerol) is bound at residue arginine 139.

It belongs to the Lgt family.

The protein localises to the cell inner membrane. The catalysed reaction is L-cysteinyl-[prolipoprotein] + a 1,2-diacyl-sn-glycero-3-phospho-(1'-sn-glycerol) = an S-1,2-diacyl-sn-glyceryl-L-cysteinyl-[prolipoprotein] + sn-glycerol 1-phosphate + H(+). The protein operates within protein modification; lipoprotein biosynthesis (diacylglyceryl transfer). Catalyzes the transfer of the diacylglyceryl group from phosphatidylglycerol to the sulfhydryl group of the N-terminal cysteine of a prolipoprotein, the first step in the formation of mature lipoproteins. The protein is Phosphatidylglycerol--prolipoprotein diacylglyceryl transferase of Marinomonas sp. (strain MWYL1).